Here is a 121-residue protein sequence, read N- to C-terminus: Chronic lymphocytic leukemia up-regulated protein 1 (121 aa).

As to expression, specifically expressed in chronic lymphocytic leukemia (CLL) cells from patients without immunoglobulin heavy-chain hypermutations. Expression is detected in all CLL cells and levels are similar in patients before and after treatment.

The protein resides in the cytoplasm. The polypeptide is Chronic lymphocytic leukemia up-regulated protein 1 (CLLU1) (Homo sapiens (Human)).